A 635-amino-acid chain; its full sequence is MATQISTRGSQCTIGQEEYSLYSSLSEDELVQMAIEQSLADKTRGPTTAEATASACTNRQPAHFYPWTRSTAPPESSPARAPMGLFQGVMQKYSSSLFKTSQLAPADPLIKAIKDGDEEALKTMIKEGKNLAEPNKEGWLPLHEAAYYGQVGCLKVLQRAYPGTIDQRTLQEETAVYLATCRGHLDCLLSLLQAGAEPDISNKSRETPLYKACERKNAEAVKILVQHNADTNHRCNRGWTALHESVSRNDLEVMQILVSGGAKVESKNAYGITPLFVAAQSGQLEALRFLAKYGADINTQASDNASALYEACKNEHEEVVEFLLSQGADANKTNKDGLLPLHIASKKGNYRIVQMLLPVTSRTRIRRSGVSPLHLAAERNHDEVLEALLSARFDVNTPLAPERARLYEDRRSSALYFAVVNNNVYATELLLQHGADPNRDVISPLLVAIRHGCLRTMQLLLDHGANIDAYIATHPTAFPATIMFAMKCLSLLKFLMDLGCDGEPCFSCLYGNGPHPPAPQPSSRFNDAPAADKEPSVVQFCEFVSAPEVSRWAGPIIDVLLDYVGNVQLCSRLKEHIDSFEDWAVIKEKAEPPRPLAHLCRLRVRKAIGKYRIKLLDTLPLPGRLIRYLKYENTQ.

A required for FLNA degradation region spans residues 8–16; the sequence is RGSQCTIGQ. Residues 26–45 enclose the UIM domain; it reads SEDELVQMAIEQSLADKTRG. 12 ANK repeats span residues 104–133, 137–167, 171–200, 204–233, 237–266, 270–299, 303–332, 336–365, 368–397, 410–439, 440–469, and 476–504; these read APAD…NLAE, EGWL…TIDQ, QEET…EPDI, SRET…DTNH, RGWT…KVES, YGIT…DINT, DNAS…DANK, DGLL…RTRI, SGVS…DVNT, RRSS…DPNR, DVIS…NIDA, and TAFP…DGEP. The residue at position 371 (S371) is a Phosphoserine; by MAPK. Residues 586-635 enclose the SOCS box domain; that stretch reads IKEKAEPPRPLAHLCRLRVRKAIGKYRIKLLDTLPLPGRLIRYLKYENTQ.

Belongs to the ankyrin SOCS box (ASB) family. As to quaternary structure, component of a probable ECS E3 ubiquitin-protein ligase complex which contains CUL5, either RBX1 or RNF7/RBX2, Elongin BC complex (ELOB and ELOC) and ASB2. Interacts with SKP2. Through its interaction with SKP2, likely to bridge the formation of dimeric E3-ubiquitin-protein ligase complexes composed of an ECS complex and an SCF(SKP2) complex. Interacts with JAK2; the interaction targets JAK2 for Notch-mediated proteasomal degradation. Interacts with TCF3/E2A; the interaction is mediated by SKP2 and targets TCF3 for Notch-mediated proteasomal degradation. Interacts with DES. Post-translationally, monoubiquitinated. Not monoubiquitinated. In terms of processing, phosphorylation at Ser-371 is required for association with FLNA and subsequent FLNA degradation. As to expression, expressed in muscle cells. In terms of tissue distribution, expressed in hematopoietic cells.

The protein localises to the cytoplasm. It is found in the cytoskeleton. It localises to the stress fiber. Its subcellular location is the myofibril. The protein resides in the sarcomere. The protein localises to the z line. It participates in protein modification; protein ubiquitination. In terms of biological role, substrate-recognition component of a SCF-like ECS (Elongin-Cullin-SOCS-box protein) E3 ubiquitin-protein ligase complex which mediates the ubiquitination and subsequent proteasomal degradation of target proteins. Mediates Notch-induced ubiquitination and degradation of substrates including TCF3/E2A and JAK2. Required during embryonic heart development for complete heart looping. Required for cardiomyocyte differentiation. Specifically promotes the ubiquitination of SMAD9 and targets it for proteasomal degradation, leading to avoid excessive accumulation of SMAD9. Plays a role in the regulation of NK-cell migration by modulating protein levels of filamin A/FLNA via regulation of its ubiquitination and proteasome degradation. Its function is as follows. Involved in myogenic differentiation and targets filamin FLNB for proteasomal degradation but not filamin FLNA. Also targets DES for proteasomal degradation. Acts as a negative regulator of skeletal muscle mass. Functionally, targets filamins FLNA and FLNB for proteasomal degradation. This leads to enhanced adhesion of hematopoietic cells to fibronectin. Required for FLNA degradation in immature cardiomyocytes which is necessary for actin cytoskeleton remodeling, leading to proper organization of myofibrils and function of mature cardiomyocytes. Required for degradation of FLNA and FLNB in immature dendritic cells (DC) which enhances immature DC migration by promoting DC podosome formation and DC-mediated degradation of the extracellular matrix. Does not promote proteasomal degradation of tyrosine-protein kinases JAK1 or JAK2 in hematopoietic cells. This chain is Ankyrin repeat and SOCS box protein 2 (ASB2), found in Homo sapiens (Human).